A 47-amino-acid polypeptide reads, in one-letter code: Gene 60 protein (47 aa).

In Mycobacterium phage L5 (Mycobacteriophage L5), this protein is Gene 60 protein (60).